The following is a 183-amino-acid chain: Adenine phosphoribosyltransferase (183 aa).

Belongs to the purine/pyrimidine phosphoribosyltransferase family. In terms of assembly, homodimer.

Its subcellular location is the cytoplasm. It carries out the reaction AMP + diphosphate = 5-phospho-alpha-D-ribose 1-diphosphate + adenine. It functions in the pathway purine metabolism; AMP biosynthesis via salvage pathway; AMP from adenine: step 1/1. Catalyzes a salvage reaction resulting in the formation of AMP, that is energically less costly than de novo synthesis. This is Adenine phosphoribosyltransferase from Citrobacter koseri (strain ATCC BAA-895 / CDC 4225-83 / SGSC4696).